We begin with the raw amino-acid sequence, 307 residues long: Thioredoxin reductase (307 aa).

Position 34–41 (34–41 (ESKAHGGQ)) interacts with FAD. The cysteines at positions 134 and 137 are disulfide-linked. Residue 275–284 (DVRAKSFRQV) coordinates FAD.

This sequence belongs to the class-II pyridine nucleotide-disulfide oxidoreductase family. Homodimer. FAD is required as a cofactor.

It is found in the cytoplasm. It carries out the reaction [thioredoxin]-dithiol + NADP(+) = [thioredoxin]-disulfide + NADPH + H(+). The sequence is that of Thioredoxin reductase (trxB) from Treponema pallidum (strain Nichols).